We begin with the raw amino-acid sequence, 339 residues long: uncharacterized protein (339 aa).

The segment at 1-24 (IQPARRHTKNTNMAKHTTKGTGHS) is disordered. Over residues 10–21 (NTNMAKHTTKGT) the composition is skewed to polar residues.

The protein localises to the mitochondrion. This is an uncharacterized protein from Zea mays (Maize).